The sequence spans 200 residues: Small ribosomal subunit protein uS4 (200 aa).

Positions 1–43 (MARYTGPRGRRDRRAGVMLSSMRKNPLEKKPYPPGEHGRDRQR) are disordered. Residues 25 to 43 (NPLEKKPYPPGEHGRDRQR) are compositionally biased toward basic and acidic residues. The 67-residue stretch at 92–158 (LRMDNVVYRM…QPIQEAVEQV (67 aa)) folds into the S4 RNA-binding domain.

It belongs to the universal ribosomal protein uS4 family. As to quaternary structure, part of the 30S ribosomal subunit. Contacts protein S5. The interaction surface between S4 and S5 is involved in control of translational fidelity.

One of the primary rRNA binding proteins, it binds directly to 16S rRNA where it nucleates assembly of the body of the 30S subunit. In terms of biological role, with S5 and S12 plays an important role in translational accuracy. The sequence is that of Small ribosomal subunit protein uS4 from Rubrobacter xylanophilus (strain DSM 9941 / JCM 11954 / NBRC 16129 / PRD-1).